A 376-amino-acid polypeptide reads, in one-letter code: Cyclin-dependent kinase 9-B (376 aa).

The region spanning Y19–F319 is the Protein kinase domain. ATP-binding positions include I25–V33 and K48. The active-site Proton acceptor is the D153. The interval P345 to F376 is disordered. A compositionally biased stretch (low complexity) spans P354–Q369.

The protein belongs to the protein kinase superfamily. CMGC Ser/Thr protein kinase family. CDC2/CDKX subfamily. In terms of assembly, associates with cyclin-T to form P-TEFb.

It localises to the nucleus. It carries out the reaction L-seryl-[protein] + ATP = O-phospho-L-seryl-[protein] + ADP + H(+). It catalyses the reaction L-threonyl-[protein] + ATP = O-phospho-L-threonyl-[protein] + ADP + H(+). The enzyme catalyses [DNA-directed RNA polymerase] + ATP = phospho-[DNA-directed RNA polymerase] + ADP + H(+). Its function is as follows. Member of the cyclin-dependent kinase pair (CDK9/cyclin-T) complex, also called positive transcription elongation factor B (P-TEFb), which is proposed to facilitate the transition from abortive to production elongation by phosphorylating the CTD (C-terminal domain) of the large subunit of RNA polymerase II (RNAP II) and SUPT5H. The protein is Cyclin-dependent kinase 9-B (cdk9-b) of Xenopus laevis (African clawed frog).